A 416-amino-acid polypeptide reads, in one-letter code: Tumor necrosis factor receptor superfamily member 16 (416 aa).

Positions 1–19 (MAGFVPLLLLLLPAGPTWG) are cleaved as a signal peptide. TNFR-Cys repeat units follow at residues 23–57 (KCLT…TVCE), 58–99 (PCLD…DAVC), 100–138 (RCAY…DTVC), and 140–180 (ECPE…DAEC). Cystine bridges form between cysteine 24-cysteine 35, cysteine 36-cysteine 49, cysteine 39-cysteine 56, cysteine 59-cysteine 75, cysteine 78-cysteine 91, cysteine 81-cysteine 99, cysteine 101-cysteine 114, cysteine 117-cysteine 130, cysteine 120-cysteine 138, cysteine 141-cysteine 156, cysteine 159-cysteine 172, and cysteine 162-cysteine 180. Residues 29–239 (YTTSGECCKA…PVVSRGTADN (211 aa)) are Extracellular-facing. Asparagine 52 carries an N-linked (GlcNAc...) asparagine glycan. Residues 240-261 (LIPVYCSILAAVVVGLVAYIAF) form a helical membrane-spanning segment. Residues 262 to 416 (KRWNSCKQNK…YSESTATSPV (155 aa)) lie on the Cytoplasmic side of the membrane. 2 stretches are compositionally biased toward polar residues: residues 270–284 (NKQG…QTPS) and 294–315 (SGIS…STQG). The tract at residues 270-328 (NKQGANNRPVNQTPSPEGEKLHSDSGISVDSQSLHDQQPPNQSTQGPAPKGDGSLYASL) is disordered. A Death domain is found at 333 to 410 (QEEVEKLLSS…DIAESLYSES (78 aa)).

As to quaternary structure, homodimer; disulfide-linked. Heterodimer with SORCS2. The extracellular domains of the heterodimer bind NGF. In terms of processing, N- and O-glycosylated. Post-translationally, phosphorylated on serine residues. In terms of tissue distribution, detected in embryonic dorsal root ganglion and retina.

It localises to the cell membrane. The protein localises to the perikaryon. Its subcellular location is the cell projection. The protein resides in the growth cone. It is found in the dendritic spine. In terms of biological role, low affinity receptor which can bind to NGF, BDNF, NTF3, and NTF4. Forms a heterodimeric receptor with SORCS2 that binds the precursor forms of NGF, BDNF and NTF3 with high affinity, and has much lower affinity for mature NGF and BDNF. Plays an important role in differentiation and survival of specific neuronal populations during development. Can mediate cell survival as well as cell death of neural cells. Plays a role in the inactivation of RHOA. Necessary for the circadian oscillation of clock genes in the suprachiasmatic nucleus (SCmgetaN) of the brain and in liver and of the genes involved in glucose and lipid metabolism in the liver. This is Tumor necrosis factor receptor superfamily member 16 (NGFR) from Gallus gallus (Chicken).